The sequence spans 333 residues: Adenosine deaminase (333 aa).

Zn(2+)-binding residues include His-12 and His-14. Residues His-14, Asp-16, and Gly-170 each contribute to the substrate site. His-197 contributes to the Zn(2+) binding site. The active-site Proton donor is the Glu-200. Asp-278 is a binding site for Zn(2+). Residue Asp-279 coordinates substrate.

The protein belongs to the metallo-dependent hydrolases superfamily. Adenosine and AMP deaminases family. Adenosine deaminase subfamily. Requires Zn(2+) as cofactor.

It catalyses the reaction adenosine + H2O + H(+) = inosine + NH4(+). The catalysed reaction is 2'-deoxyadenosine + H2O + H(+) = 2'-deoxyinosine + NH4(+). Functionally, catalyzes the hydrolytic deamination of adenosine and 2-deoxyadenosine. The protein is Adenosine deaminase of Escherichia coli O157:H7.